Here is a 587-residue protein sequence, read N- to C-terminus: Kelch-like ECH-associated protein 1B (587 aa).

The region spanning 44–117 (CDVTLRVRYC…AYTASISVGE (74 aa)) is the BTB domain. Positions 153 to 253 (IGIASFAEQI…LTPHFLQRQL (101 aa)) constitute a BACK domain. Kelch repeat units lie at residues 292 to 337 (LIYT…VISG), 338 to 388 (LLYA…VIDG), 389 to 435 (MIYA…VINR), 436 to 482 (LLYA…ALGN), 484 to 529 (IYVM…THHG), and 530 to 576 (RIYV…VTME).

Belongs to the KEAP1 family. In terms of assembly, homodimer and heterodimer; heterodimerizes with keap1a. Component of the BCR(KEAP1) E3 ubiquitin ligase complex, at least composed of 2 molecules of cul3, 2 molecules of keap1 (keap1a and/or keap1b), and rbx1. Interacts with nfe2l2/nrf2; the interaction is direct. Post-translationally, non-enzymatic covalent modifications of reactive cysteines by electrophile metabolites inactivate the BCR(KEAP1) complex. Widely expressed.

It localises to the cytoplasm. The protein localises to the nucleus. Its pathway is protein modification; protein ubiquitination. With respect to regulation, ubiquitin ligase activity of the BCR(KEAP1) complex is inhibited by oxidative stress and electrophile metabolites such as sulforaphane. Electrophile metabolites react with reactive cysteine residues in keap1 and trigger non-enzymatic covalent modifications of these cysteine residues, leading to inactivate the ubiquitin ligase activity of the BCR(KEAP1) complex. In terms of biological role, substrate-specific adapter of a BCR (BTB-CUL3-RBX1) E3 ubiquitin ligase complex that regulates the response to oxidative stress by targeting nfe2l2/nrf2 for ubiquitination. Keap1 acts as a key sensor of oxidative and electrophilic stress: in normal conditions, the BCR(KEAP1) complex mediates ubiquitination and degradation of nfe2l2/nrf2, a transcription factor regulating expression of many cytoprotective genes. In response to oxidative stress, different electrophile metabolites trigger non-enzymatic covalent modifications of highly reactive cysteine residues in KEAP1, leading to inactivate the ubiquitin ligase activity of the BCR(KEAP1) complex, promoting nfe2l2/nrf2 nuclear accumulation and expression of phase II detoxifying enzymes. In Danio rerio (Zebrafish), this protein is Kelch-like ECH-associated protein 1B.